The sequence spans 202 residues: COMM domain-containing protein 10 (202 aa).

An N-acetylalanine modification is found at alanine 2. Residues 133 to 202 enclose the COMM domain; that stretch reads KLETVGWQLN…TIQAQLDSLT (70 aa). Serine 155 carries the post-translational modification Phosphoserine.

It belongs to the COMM domain-containing protein 10 family. In terms of assembly, component of the commander complex consisting of the CCC subcomplex and the retriever subcomplex. Component of the CCC (COMMD/CCDC22/CCDC93) subcomplex consisting of COMMD1, COMMD2, COMMD3, COMMD4, COMMD5, COMMD6, COMMD7, COMMD8, COMMD9, COMMD10, CCDC22 and CCDC93; within the complex forms a heterodimer with COMMD5. Interacts with RELA, RELB, NFKB1/p105, NFKB2/p100. Interacts with CCDC22, CCDC93, SCNN1B, CUL1, CUL2, CUL3, CUL4A, CUL4B, CUL7. Ubiquitous.

It localises to the cytoplasm. Its subcellular location is the nucleus. Its function is as follows. Scaffold protein in the commander complex that is essential for endosomal recycling of transmembrane cargos; the commander complex is composed of the CCC subcomplex and the retriever subcomplex. May modulate activity of cullin-RING E3 ubiquitin ligase (CRL) complexes. May down-regulate activation of NF-kappa-B. This chain is COMM domain-containing protein 10 (COMMD10), found in Homo sapiens (Human).